Reading from the N-terminus, the 83-residue chain is Stephenin-3 (83 aa).

A signal peptide spans 1-24 (MSSGGLLLLLGLLTLWEVLTPVSS). The 50-residue stretch at 31 to 80 (CELPADPGPCNALSQAYYNAVQHKCLKFRYGGCKANPNTFKTIEECKRTC) folds into the BPTI/Kunitz inhibitor domain. Disulfide bonds link Cys-31–Cys-80, Cys-40–Cys-63, and Cys-55–Cys-76.

The protein localises to the secreted. In terms of biological role, serine protease inhibitor. This Hoplocephalus stephensii (Stephens's banded snake) protein is Stephenin-3.